A 337-amino-acid chain; its full sequence is Phenylalanine--tRNA ligase alpha subunit (337 aa).

E258 is a binding site for Mg(2+).

The protein belongs to the class-II aminoacyl-tRNA synthetase family. Phe-tRNA synthetase alpha subunit type 1 subfamily. In terms of assembly, tetramer of two alpha and two beta subunits. It depends on Mg(2+) as a cofactor.

The protein resides in the cytoplasm. It catalyses the reaction tRNA(Phe) + L-phenylalanine + ATP = L-phenylalanyl-tRNA(Phe) + AMP + diphosphate + H(+). The protein is Phenylalanine--tRNA ligase alpha subunit of Burkholderia mallei (strain ATCC 23344).